A 340-amino-acid polypeptide reads, in one-letter code: Glyceraldehyde-3-phosphate dehydrogenase (340 aa).

Residues 11–12 (TI) and Gly-109 contribute to the NAD(+) site. Cys-123 and Cys-149 form a disulfide bridge. A D-glyceraldehyde 3-phosphate-binding site is contributed by 138–140 (SCN). Catalysis depends on Cys-139, which acts as the Nucleophile. Arg-167 is an NAD(+) binding site. A D-glyceraldehyde 3-phosphate-binding site is contributed by 193–194 (HA). Gln-300 is a binding site for NAD(+).

This sequence belongs to the glyceraldehyde-3-phosphate dehydrogenase family. As to quaternary structure, homotetramer.

The protein resides in the cytoplasm. It carries out the reaction D-glyceraldehyde 3-phosphate + phosphate + NADP(+) = (2R)-3-phospho-glyceroyl phosphate + NADPH + H(+). The catalysed reaction is D-glyceraldehyde 3-phosphate + phosphate + NAD(+) = (2R)-3-phospho-glyceroyl phosphate + NADH + H(+). Its pathway is carbohydrate degradation; glycolysis; pyruvate from D-glyceraldehyde 3-phosphate: step 1/5. Can use both NAD and NADP as cofactors, but exhibits a marked preference for NADP. The protein is Glyceraldehyde-3-phosphate dehydrogenase (gap) of Saccharolobus solfataricus (strain ATCC 35092 / DSM 1617 / JCM 11322 / P2) (Sulfolobus solfataricus).